The chain runs to 212 residues: Cytochrome c biogenesis ATP-binding export protein CcmA (212 aa).

Residues 8 to 212 (LQATALACER…RSIDLAKGSA (205 aa)) form the ABC transporter domain. Residue 40-47 (GPNGSGKT) participates in ATP binding.

It belongs to the ABC transporter superfamily. CcmA exporter (TC 3.A.1.107) family. The complex is composed of two ATP-binding proteins (CcmA) and two transmembrane proteins (CcmB).

The protein localises to the cell inner membrane. The catalysed reaction is heme b(in) + ATP + H2O = heme b(out) + ADP + phosphate + H(+). Its function is as follows. Part of the ABC transporter complex CcmAB involved in the biogenesis of c-type cytochromes; once thought to export heme, this seems not to be the case, but its exact role is uncertain. Responsible for energy coupling to the transport system. The polypeptide is Cytochrome c biogenesis ATP-binding export protein CcmA (Pseudomonas syringae pv. tomato (strain ATCC BAA-871 / DC3000)).